Consider the following 508-residue polypeptide: Catalase (508 aa).

Positions 1 to 21 are cleaved as a signal peptide; sequence MHMSKSFLLISMGLASISVHA. Residues histidine 72 and asparagine 145 contribute to the active site. Tyrosine 353 is a heme binding site. Polar residues predominate over residues 373-392; that stretch reads PKSPVANHNQDGPSNNSTGL. Positions 373 to 396 are disordered; it reads PKSPVANHNQDGPSNNSTGLGNVD.

It belongs to the catalase family. Heme is required as a cofactor.

It localises to the periplasm. It catalyses the reaction 2 H2O2 = O2 + 2 H2O. Functionally, decomposes hydrogen peroxide into water and oxygen; serves to protect cells from the toxic effects of hydrogen peroxide. The protein is Catalase of Vibrio vulnificus (strain CMCP6).